A 352-amino-acid polypeptide reads, in one-letter code: 4-hydroxy-3-methylbut-2-en-1-yl diphosphate synthase (flavodoxin) (352 aa).

[4Fe-4S] cluster-binding residues include cysteine 265, cysteine 268, cysteine 300, and glutamate 307.

The protein belongs to the IspG family. Requires [4Fe-4S] cluster as cofactor.

The catalysed reaction is (2E)-4-hydroxy-3-methylbut-2-enyl diphosphate + oxidized [flavodoxin] + H2O + 2 H(+) = 2-C-methyl-D-erythritol 2,4-cyclic diphosphate + reduced [flavodoxin]. The protein operates within isoprenoid biosynthesis; isopentenyl diphosphate biosynthesis via DXP pathway; isopentenyl diphosphate from 1-deoxy-D-xylulose 5-phosphate: step 5/6. Its function is as follows. Converts 2C-methyl-D-erythritol 2,4-cyclodiphosphate (ME-2,4cPP) into 1-hydroxy-2-methyl-2-(E)-butenyl 4-diphosphate. In Persephonella marina (strain DSM 14350 / EX-H1), this protein is 4-hydroxy-3-methylbut-2-en-1-yl diphosphate synthase (flavodoxin).